We begin with the raw amino-acid sequence, 255 residues long: Ribonuclease HII (255 aa).

Residues 72-255 (RLIAGVDEAG…KTFAPVQSYC (184 aa)) form the RNase H type-2 domain. A divalent metal cation-binding residues include Asp78, Glu79, and Asp170.

This sequence belongs to the RNase HII family. Mn(2+) is required as a cofactor. The cofactor is Mg(2+).

It is found in the cytoplasm. The enzyme catalyses Endonucleolytic cleavage to 5'-phosphomonoester.. Its function is as follows. Endonuclease that specifically degrades the RNA of RNA-DNA hybrids. The polypeptide is Ribonuclease HII (Bacillus velezensis (strain DSM 23117 / BGSC 10A6 / LMG 26770 / FZB42) (Bacillus amyloliquefaciens subsp. plantarum)).